The chain runs to 136 residues: Histone H2A (136 aa).

The span at 1–11 (MTGGKSAGGKA) shows a compositional bias: gly residues. Positions 1 to 23 (MTGGKSAGGKAGTTKNAQSRSSK) are disordered. N6-acetyllysine occurs at positions 5 and 10. N5-methylglutamine is present on Q107. S133 carries the phosphoserine modification. Positions 133–134 (SQ) match the [ST]-Q motif motif.

The protein belongs to the histone H2A family. The nucleosome is a histone octamer containing two molecules each of H2A, H2B, H3 and H4 assembled in one H3-H4 heterotetramer and two H2A-H2B heterodimers. The octamer wraps approximately 147 bp of DNA. In terms of processing, phosphorylated to form H2AS128ph (gamma-H2A) in response to DNA double-strand breaks (DSBs) generated by exogenous genotoxic agents and by stalled replication forks. Phosphorylation is dependent on the DNA damage checkpoint kinases MEC1/ATR and TEL1/ATM, spreads on either side of a detected DSB site and may mark the surrounding chromatin for recruitment of proteins required for DNA damage signaling and repair. Gamma-H2A is removed from the DNA prior to the strand invasion-primer extension step of the repair process and subsequently dephosphorylated. Dephosphorylation is necessary for efficient recovery from the DNA damage checkpoint. Post-translationally, acetylated by ESA1 to form H2AK4ac and H2AK7ac.

Its subcellular location is the nucleus. The protein localises to the chromosome. Core component of nucleosome which plays a central role in DNA double strand break (DSB) repair. Nucleosomes wrap and compact DNA into chromatin, limiting DNA accessibility to the cellular machineries which require DNA as a template. Histones thereby play a central role in transcription regulation, DNA repair, DNA replication and chromosomal stability. DNA accessibility is regulated via a complex set of post-translational modifications of histones, also called histone code, and nucleosome remodeling. This Botryotinia fuckeliana (strain B05.10) (Noble rot fungus) protein is Histone H2A (hta1).